Consider the following 235-residue polypeptide: MDKIIGKQLPKKDQDNEHWVSMSDLMAGLMMVFMFISIAYMHYVRIEKEKIKEVAVAYENAQLQIYNALDIEFAKDLQDWDAEIDKQTLEVRFKSPDVLFGLGSTELKPKFKLILDDFFPRYLKVLDNYQEHITEVRIEGHTSTDWTGTTNPDIAYFNNMALSQGRTRAVLQYVYDIKNIATHQQWVKSKFAAVGYSSAHPILDKTGKEDPNRSRRVTFKVVTNAELQIRKIIQE.

The chain crosses the membrane as a helical span at residues 25–44 (LMAGLMMVFMFISIAYMHYV). The OmpA-like domain maps to 87 to 225 (QTLEVRFKSP…RVTFKVVTNA (139 aa)).

It belongs to the MotB family.

The protein localises to the cell inner membrane. Component of antiviral defense system Zorya type II, composed of ZorA, ZorB and ZorE. Expression of Zorya type II in E.coli (strain MG1655) confers resistance to phages SECphi7 and T7. While most T7 infected Zorya-containing cells undergo abortive infection, a minority produce viable phage progeny. These eventually accumulate to a high multiplicity of infection, leading to culture collapse by 170 minutes after initial infection. ZorA and ZorB probably assemble in the cell inner membrane and exert their effect there. This is Zorya protein ZorB from Escherichia coli (strain ATCC 8739 / DSM 1576 / NBRC 3972 / NCIMB 8545 / WDCM 00012 / Crooks).